The primary structure comprises 245 residues: ATP synthase subunit b (245 aa).

Residues 3–23 form a helical membrane-spanning segment; it reads SFNLLTIVSSIVNLLALAWII.

Belongs to the ATPase B chain family. As to quaternary structure, F-type ATPases have 2 components, F(1) - the catalytic core - and F(0) - the membrane proton channel. F(1) has five subunits: alpha(3), beta(3), gamma(1), delta(1), epsilon(1). F(0) has three main subunits: a(1), b(2) and c(10-14). The alpha and beta chains form an alternating ring which encloses part of the gamma chain. F(1) is attached to F(0) by a central stalk formed by the gamma and epsilon chains, while a peripheral stalk is formed by the delta and b chains.

It is found in the cell inner membrane. In terms of biological role, f(1)F(0) ATP synthase produces ATP from ADP in the presence of a proton or sodium gradient. F-type ATPases consist of two structural domains, F(1) containing the extramembraneous catalytic core and F(0) containing the membrane proton channel, linked together by a central stalk and a peripheral stalk. During catalysis, ATP synthesis in the catalytic domain of F(1) is coupled via a rotary mechanism of the central stalk subunits to proton translocation. Component of the F(0) channel, it forms part of the peripheral stalk, linking F(1) to F(0). The protein is ATP synthase subunit b of Dictyoglomus thermophilum (strain ATCC 35947 / DSM 3960 / H-6-12).